The following is a 227-amino-acid chain: 2,3-bisphosphoglycerate-dependent phosphoglycerate mutase (227 aa).

Residues 7–14 (RHGFSEWN), 20–21 (TG), Arg59, 86–89 (ERHY), Lys97, 113–114 (RR), and 182–183 (GN) contribute to the substrate site. The Tele-phosphohistidine intermediate role is filled by His8. Residue Glu86 is the Proton donor/acceptor of the active site.

Belongs to the phosphoglycerate mutase family. BPG-dependent PGAM subfamily. As to quaternary structure, homodimer.

The enzyme catalyses (2R)-2-phosphoglycerate = (2R)-3-phosphoglycerate. It participates in carbohydrate degradation; glycolysis; pyruvate from D-glyceraldehyde 3-phosphate: step 3/5. Its function is as follows. Catalyzes the interconversion of 2-phosphoglycerate and 3-phosphoglycerate. The polypeptide is 2,3-bisphosphoglycerate-dependent phosphoglycerate mutase (Glaesserella parasuis serovar 5 (strain SH0165) (Haemophilus parasuis)).